Reading from the N-terminus, the 78-residue chain is Defensin-like protein 74 (78 aa).

The N-terminal stretch at 1-28 is a signal peptide; that stretch reads MNYKIGIMSLLVITSIIFLFLVPDKVEA. 4 cysteine pairs are disulfide-bonded: Cys32–Cys73, Cys36–Cys58, Cys42–Cys71, and Cys46–Cys72.

It belongs to the DEFL family.

Its subcellular location is the secreted. The sequence is that of Defensin-like protein 74 (LCR43) from Arabidopsis thaliana (Mouse-ear cress).